Reading from the N-terminus, the 380-residue chain is Tubulin-like protein CetZ (380 aa).

GTP-binding positions include 10–14 (QCGTK), 103–105 (GTG), Glu136, Asn163, and Asn181. Residues 359–380 (PSLEATGSDDPEGFAEYREVSR) form a disordered region.

The protein belongs to the CetZ family.

The protein resides in the cytoplasm. Its function is as follows. Involved in cell shape control. This chain is Tubulin-like protein CetZ, found in Thermococcus kodakarensis (strain ATCC BAA-918 / JCM 12380 / KOD1) (Pyrococcus kodakaraensis (strain KOD1)).